The chain runs to 474 residues: Methylenetetrahydrofolate--tRNA-(uracil-5-)-methyltransferase TrmFO (474 aa).

15-20 (GAGLAG) is a binding site for FAD. Positions 453-474 (PLLPTAPDTTGAAGEETTQAES) are disordered.

The protein belongs to the MnmG family. TrmFO subfamily. The cofactor is FAD.

Its subcellular location is the cytoplasm. It carries out the reaction uridine(54) in tRNA + (6R)-5,10-methylene-5,6,7,8-tetrahydrofolate + NADH + H(+) = 5-methyluridine(54) in tRNA + (6S)-5,6,7,8-tetrahydrofolate + NAD(+). The catalysed reaction is uridine(54) in tRNA + (6R)-5,10-methylene-5,6,7,8-tetrahydrofolate + NADPH + H(+) = 5-methyluridine(54) in tRNA + (6S)-5,6,7,8-tetrahydrofolate + NADP(+). Functionally, catalyzes the folate-dependent formation of 5-methyl-uridine at position 54 (M-5-U54) in all tRNAs. The protein is Methylenetetrahydrofolate--tRNA-(uracil-5-)-methyltransferase TrmFO of Nitratidesulfovibrio vulgaris (strain ATCC 29579 / DSM 644 / CCUG 34227 / NCIMB 8303 / VKM B-1760 / Hildenborough) (Desulfovibrio vulgaris).